The following is a 555-amino-acid chain: Genome polyprotein (555 aa).

Over 1-7 (KHAQRIE) the chain is Extracellular. The chain crosses the membrane as a helical span at residues 8–28 (TWILRHPGFTIMAAILAYTIG). Over 29–34 (TTHFQR) the chain is Cytoplasmic. A helical transmembrane segment spans residues 35–49 (ALIFILLTAVAPSMT). The Extracellular segment spans residues 50–494 (MRCIGISNRD…LHQVFGAIYG (445 aa)). Cystine bridges form between C52-C79, C109-C170, C123-C154, and C141-C165. A glycan (N-linked (GlcNAc...) asparagine; by host) is linked at N116. The tract at residues 147 to 160 (DRGWGNGCGLFGKG) is fusion peptide. N202 carries an N-linked (GlcNAc...) asparagine; by host glycan. 2 disulfide bridges follow: C234–C334 and C351–C382. Residues 495-515 (AAFSGVSWTMKILIGVIITWI) form a helical membrane-spanning segment. The Cytoplasmic segment spans residues 516–521 (GMNSRS). Residues 522 to 542 (TSLSVSLVLVGIVTLYLEVMV) traverse the membrane as a helical segment. Residues 543 to 555 (QADSGCVVSWKNK) lie on the Extracellular side of the membrane.

In terms of assembly, homodimer; in the endoplasmic reticulum and Golgi. Interacts with protein prM. Interacts with non-structural protein 1. As to quaternary structure, homodimer; Homohexamer when secreted. Interacts with envelope protein E. Post-translationally, N-glycosylated. In terms of processing, N-glycosylated. The excreted form is glycosylated and this is required for efficient secretion of the protein from infected cells. Specific enzymatic cleavages in vivo yield mature proteins. Cleavages in the lumen of endoplasmic reticulum are performed by host signal peptidase, wereas cleavages in the cytoplasmic side are performed by serine protease NS3. Signal cleavage at the 2K-4B site requires a prior NS3 protease-mediated cleavage at the 4A-2K site.

It localises to the virion membrane. It is found in the host endoplasmic reticulum membrane. The protein resides in the secreted. Functionally, may play a role in virus budding. Exerts cytotoxic effects by activating a mitochondrial apoptotic pathway through M ectodomain. May display a viroporin activity. Its function is as follows. Binds to host cell surface receptor and mediates fusion between viral and cellular membranes. Envelope protein is synthesized in the endoplasmic reticulum in the form of heterodimer with protein prM. They play a role in virion budding in the ER, and the newly formed immature particle is covered with 60 spikes composed of heterodimer between precursor prM and envelope protein E. The virion is transported to the Golgi apparatus where the low pH causes dissociation of PrM-E heterodimers and formation of E homodimers. prM-E cleavage is inefficient, and many virions are only partially matured. These uncleaved prM would play a role in immune evasion. In terms of biological role, involved in immune evasion, pathogenesis and viral replication. Once cleaved off the polyprotein, is targeted to three destinations: the viral replication cycle, the plasma membrane and the extracellular compartment. Essential for viral replication. Required for formation of the replication complex and recruitment of other non-structural proteins to the ER-derived membrane structures. Excreted as a hexameric lipoparticle that plays a role against host immune response. Antagonizing the complement function. Binds to the host macrophages and dendritic cells. Inhibits signal transduction originating from Toll-like receptor 3 (TLR3). Disrupts the host endothelial glycocalyx layer of host pulmonary microvascular endothelial cells, inducing degradation of sialic acid and shedding of heparan sulfate proteoglycans. NS1 induces expression of sialidases, heparanase, and activates cathepsin L, which activates heparanase via enzymatic cleavage. These effects are probably linked to the endothelial hyperpermeability observed in severe dengue disease. This is Genome polyprotein from Dengue virus type 2 (strain Thailand/TH-36/1958) (DENV-2).